The following is a 290-amino-acid chain: Diaminopimelate epimerase (290 aa).

Substrate-binding residues include N17, Q49, and N69. Catalysis depends on C78, which acts as the Proton donor. Residues 79 to 80, N165, N198, and 216 to 217 contribute to the substrate site; these read GN and ER. C225 functions as the Proton acceptor in the catalytic mechanism. Position 226–227 (226–227) interacts with substrate; sequence GS.

It belongs to the diaminopimelate epimerase family. In terms of assembly, homodimer.

The protein localises to the cytoplasm. The catalysed reaction is (2S,6S)-2,6-diaminopimelate = meso-2,6-diaminopimelate. The protein operates within amino-acid biosynthesis; L-lysine biosynthesis via DAP pathway; DL-2,6-diaminopimelate from LL-2,6-diaminopimelate: step 1/1. Catalyzes the stereoinversion of LL-2,6-diaminopimelate (L,L-DAP) to meso-diaminopimelate (meso-DAP), a precursor of L-lysine and an essential component of the bacterial peptidoglycan. This chain is Diaminopimelate epimerase, found in Methylocella silvestris (strain DSM 15510 / CIP 108128 / LMG 27833 / NCIMB 13906 / BL2).